Reading from the N-terminus, the 482-residue chain is Iroquois-class homeodomain protein irx-5 (482 aa).

A DNA-binding region (homeobox) is located at residues 109–171; it reads DPAYRKNATR…NARRRLKKEN (63 aa). 2 disordered regions span residues 173–307 and 462–482; these read MTWT…HQSH and QSQA…MSSI. Residues 182–198 are compositionally biased toward acidic residues; the sequence is EDEEDDENIDLEKNEED. A compositionally biased stretch (basic and acidic residues) spans 199 to 256; it reads DPRKLEEKGDQDGDAGDQKRSPSAVDFDRLEGEVRQGKELDQTRSDSEQNEVEERNDL. Over residues 264-273 the composition is skewed to pro residues; that stretch reads PTSPLCPPDQ. Positions 284–305 are enriched in basic residues; that stretch reads HRHTVHNHHHQSIQQLHHHSHQ. Positions 467-482 are enriched in basic and acidic residues; that stretch reads LNKDTPYEMKKGMSSI.

The protein belongs to the TALE/IRO homeobox family. Expressed in the neural plate in overlapping patterns with other irx members, which all share an anterior border of expression. Broadly expressed in the tailbud rhombencephalon (hindbrain). Outside the nervous system and at tailbud stages, expressed in the developing otic vesicle and branchial arches.

The protein localises to the nucleus. Functionally, acts partially redundantly with other irx members in neural patterning. Required for formation of the posterior forebrain, midbrain, hindbrain, and to a lesser extent, spinal cord. Patterns the neuroectoderm in both the anterior/posterior and dorsal/ventral axes. Does not appear to play a role in pronephros kidney development. Involved in craniofacial and gonadal development. Modulates the migration of progenitor cell populations in branchial arches and gonads by repressing CXCL12. In Xenopus tropicalis (Western clawed frog), this protein is Iroquois-class homeodomain protein irx-5.